Here is a 1159-residue protein sequence, read N- to C-terminus: RAD51-associated protein 2 (1159 aa).

Residues 1–35 (MSLPQPTPRMAELRKPTSSLTPPEDPDSQPPSSKR) form a disordered region. The interaction with RAD51 stretch occupies residues 1111–1159 (SHFPHGISRVRPLKTCSRPIRIGLSRKARIKQLHPYLKQMCYGNLKENF).

In terms of assembly, interacts with RAD51. In terms of tissue distribution, specifically expressed in meiotic tissues. Highly expressed in testis.

The chain is RAD51-associated protein 2 (RAD51AP2) from Homo sapiens (Human).